Reading from the N-terminus, the 104-residue chain is uncharacterized protein (104 aa).

The chain crosses the membrane as a helical span at residues 77–98; sequence IAAVRANIIICACFFYLFCYCS.

It localises to the membrane. This is an uncharacterized protein from Saccharomyces cerevisiae (strain ATCC 204508 / S288c) (Baker's yeast).